Here is a 479-residue protein sequence, read N- to C-terminus: Glutamyl-tRNA(Gln) amidotransferase subunit A (479 aa).

Active-site charge relay system residues include lysine 71 and serine 146. Serine 170 functions as the Acyl-ester intermediate in the catalytic mechanism.

The protein belongs to the amidase family. GatA subfamily. Heterotrimer of A, B and C subunits.

The enzyme catalyses L-glutamyl-tRNA(Gln) + L-glutamine + ATP + H2O = L-glutaminyl-tRNA(Gln) + L-glutamate + ADP + phosphate + H(+). Functionally, allows the formation of correctly charged Gln-tRNA(Gln) through the transamidation of misacylated Glu-tRNA(Gln) in organisms which lack glutaminyl-tRNA synthetase. The reaction takes place in the presence of glutamine and ATP through an activated gamma-phospho-Glu-tRNA(Gln). The polypeptide is Glutamyl-tRNA(Gln) amidotransferase subunit A (Lactobacillus gasseri (strain ATCC 33323 / DSM 20243 / BCRC 14619 / CIP 102991 / JCM 1131 / KCTC 3163 / NCIMB 11718 / NCTC 13722 / AM63)).